An 88-amino-acid chain; its full sequence is Eclosion hormone (88 aa).

The signal sequence occupies residues 1–26 (MANKLTAVIVVALAVAFMVNLDYANC). Cystine bridges form between cysteine 40–cysteine 64, cysteine 44–cysteine 60, and cysteine 47–cysteine 75.

The protein belongs to the insect eclosion hormone family.

It localises to the secreted. Functionally, neuropeptide that triggers the performance of ecdysis behaviors at the end of a molt. It triggers adult behavior patterns: larval, pupal and adult ecdysis, and plasticization during the molt. The chain is Eclosion hormone from Bombyx mori (Silk moth).